The chain runs to 315 residues: MTQEFEHLSVLLTETVAGLNIKPDGIYIDGTFGRGGHSRKVLEELGPNGRLIAIDRDPQAIAAAEQFKDDSRFQIVHGGFGQLADYVEDLGLKGKIDGVLLDFGVSSPQLDDAERGFSFLRDGPLDMRMDNSQGQTAAQWLARAEIEDMAWVFKTYGEEKNSRHIARCIAADREKAPFLRTKELADLIARITKNKERNKHPATRVFQAIRIYINSELEQIDQALEGALTVLAPEGRLSVISFHSLEDRMVKRFIRRNSQGESVPHGLPITEEEINKSRKLKGVGKAIKPSAEEIERNARARSSVLRIAQRLPYEA.

S-adenosyl-L-methionine contacts are provided by residues 35 to 37, Asp55, Phe80, Asp102, and Gln109; that span reads GGH.

Belongs to the methyltransferase superfamily. RsmH family.

The protein resides in the cytoplasm. The catalysed reaction is cytidine(1402) in 16S rRNA + S-adenosyl-L-methionine = N(4)-methylcytidine(1402) in 16S rRNA + S-adenosyl-L-homocysteine + H(+). In terms of biological role, specifically methylates the N4 position of cytidine in position 1402 (C1402) of 16S rRNA. This Shewanella halifaxensis (strain HAW-EB4) protein is Ribosomal RNA small subunit methyltransferase H.